The sequence spans 157 residues: Small ribosomal subunit protein uS7 (157 aa).

Belongs to the universal ribosomal protein uS7 family. In terms of assembly, part of the 30S ribosomal subunit. Contacts proteins S9 and S11.

Its function is as follows. One of the primary rRNA binding proteins, it binds directly to 16S rRNA where it nucleates assembly of the head domain of the 30S subunit. Is located at the subunit interface close to the decoding center, probably blocks exit of the E-site tRNA. In Desulfotalea psychrophila (strain LSv54 / DSM 12343), this protein is Small ribosomal subunit protein uS7.